An 839-amino-acid chain; its full sequence is DNA (cytosine-5)-methyltransferase CMT3 (839 aa).

Disordered regions lie at residues 1-38 (MAPK…EPVT) and 51-86 (LDEP…KTKD). A compositionally biased stretch (basic residues) spans 19-30 (PKPKKRAPKRAK). Basic and acidic residues predominate over residues 51-70 (LDEPIPESEAKSTWPDRYKP). In terms of domain architecture, BAH spans 108-227 (QIYELNDDAY…LPYDTFEAIQ (120 aa)). The region spanning 269 to 813 (ATLLDLYSGC…YALGTAFQGL (545 aa)) is the SAM-dependent MTase C5-type domain. Residues 382–447 (FTVDKIVGIS…LGYKSGILPL (66 aa)) enclose the Chromo domain. Residue cysteine 460 is part of the active site.

It belongs to the class I-like SAM-binding methyltransferase superfamily. C5-methyltransferase family. In terms of assembly, homodimer. Interacts with HP1 and, through its chromodomain, with the N-terminal tail of histone H3 doubly methylated at 'Lys-9' and 'Lys-27'. Binds to JMJ24. Ubiquitinated by JMJ24, subsequently beingargeted to proteasomal degradation thus initiating the destabilization of the heterochromatic state of endogenous silenced loci.

It localises to the nucleus. The catalysed reaction is a 2'-deoxycytidine in DNA + S-adenosyl-L-methionine = a 5-methyl-2'-deoxycytidine in DNA + S-adenosyl-L-homocysteine + H(+). Involved in the CpXpG methylation (e.g. CHG cytosine) and in gene silencing. Methylates preferentially transposon-related sequences. Functionally redundant to DRM1/DRM2 to maintain non-CpG methylation. Involved in RNA-directed DNA methylation. The sequence is that of DNA (cytosine-5)-methyltransferase CMT3 from Arabidopsis thaliana (Mouse-ear cress).